Here is a 1051-residue protein sequence, read N- to C-terminus: Protein transport protein Sec16B (1051 aa).

Over residues 1–23 (MEPWVPQTQGRTTGPSRDTNRGL) the composition is skewed to polar residues. The tract at residues 1-109 (MEPWVPQTQG…PYQRYHTPTP (109 aa)) is disordered. Residues 39–63 (DKYHQWQDAHKNSKSQQDLRDDHQQ) show a composition bias toward basic and acidic residues. A compositionally biased stretch (polar residues) spans 64–77 (SHSVSRSGEWSQPV). A phosphoserine mark is found at S70 and S137. A disordered region spans residues 157-203 (EKHNGTFGANSDTQFQFTSKNPYRDSPASVSGQEQPGEFFPESEAQK). Residues 163–177 (FGANSDTQFQFTSKN) are compositionally biased toward polar residues. Phosphoserine is present on residues S182, S185, and S245. Residues 263–708 (APMRFYVPHV…KHKDLEQNRT (446 aa)) form a central conserved domain (CCD); required for localization to endoplasmic reticulum exit sites region. Over residues 703–715 (LEQNRTGAPRDPD) the composition is skewed to basic and acidic residues. Disordered stretches follow at residues 703–754 (LEQN…LWST), 798–820 (SGAS…EDML), and 850–1051 (TPAA…TQPC). Positions 737–754 (GHQNYSEDSEYSSTLWST) are enriched in polar residues. Residues 798-809 (SGASGSSVAVTG) show a composition bias toward low complexity. T850 is modified (phosphothreonine). S860, S863, S866, S874, and S875 each carry phosphoserine. A compositionally biased stretch (basic and acidic residues) spans 877-897 (GADKPSHPDASQKGKLGDGKN). Residues 900–920 (SSGFGWFSWFRSKPASSVSTS) show a composition bias toward low complexity. Residues 921-932 (GDEDSSDSSDSE) are compositionally biased toward acidic residues. Residues 936 to 947 (RASSPHHASPGL) show a composition bias toward low complexity. Gly residues predominate over residues 984 to 993 (EGMGIGGFSG). The segment covering 1022 to 1037 (NPSQVPQLPTASSLNR) has biased composition (polar residues).

It belongs to the SEC16 family. SEC16A and SEC16B are each present in multiple copies in a heteromeric complex. Interacts with TFG. Interacts with SEC13. Liver.

It is found in the endoplasmic reticulum membrane. The protein resides in the golgi apparatus membrane. Its function is as follows. Plays a role in the organization of the endoplasmic reticulum exit sites (ERES), also known as transitional endoplasmic reticulum (tER). Required for secretory cargo traffic from the endoplasmic reticulum to the Golgi apparatus. Involved in peroxisome biogenesis. Regulates the transport of peroxisomal biogenesis factors PEX3 and PEX16 from the ER to peroxisomes. This is Protein transport protein Sec16B (Sec16b) from Mus musculus (Mouse).